Consider the following 528-residue polypeptide: Arginine--tRNA ligase (528 aa).

The 'HIGH' region signature appears at 112 to 122 (ANPTGPLHIGH).

It belongs to the class-I aminoacyl-tRNA synthetase family. In terms of assembly, monomer.

It is found in the cytoplasm. It carries out the reaction tRNA(Arg) + L-arginine + ATP = L-arginyl-tRNA(Arg) + AMP + diphosphate. In Wolinella succinogenes (strain ATCC 29543 / DSM 1740 / CCUG 13145 / JCM 31913 / LMG 7466 / NCTC 11488 / FDC 602W) (Vibrio succinogenes), this protein is Arginine--tRNA ligase.